We begin with the raw amino-acid sequence, 334 residues long: Ketol-acid reductoisomerase (NADP(+)) (334 aa).

The 181-residue stretch at 1 to 181 folds into the KARI N-terminal Rossmann domain; sequence MNRYYDKNAD…GGGRTGILET (181 aa). NADP(+)-binding positions include 24–27, R47, S50, S52, and 82–85; these read YGSQ and DEFQ. H107 is a catalytic residue. G133 serves as a coordination point for NADP(+). One can recognise a KARI C-terminal knotted domain in the interval 182–323; the sequence is SFKDETETDL…ESLRSMMPWI (142 aa). Mg(2+)-binding residues include D190, E194, E226, and E230. A substrate-binding site is contributed by S251.

Belongs to the ketol-acid reductoisomerase family. Requires Mg(2+) as cofactor.

The catalysed reaction is (2R)-2,3-dihydroxy-3-methylbutanoate + NADP(+) = (2S)-2-acetolactate + NADPH + H(+). The enzyme catalyses (2R,3R)-2,3-dihydroxy-3-methylpentanoate + NADP(+) = (S)-2-ethyl-2-hydroxy-3-oxobutanoate + NADPH + H(+). The protein operates within amino-acid biosynthesis; L-isoleucine biosynthesis; L-isoleucine from 2-oxobutanoate: step 2/4. Its pathway is amino-acid biosynthesis; L-valine biosynthesis; L-valine from pyruvate: step 2/4. Involved in the biosynthesis of branched-chain amino acids (BCAA). Catalyzes an alkyl-migration followed by a ketol-acid reduction of (S)-2-acetolactate (S2AL) to yield (R)-2,3-dihydroxy-isovalerate. In the isomerase reaction, S2AL is rearranged via a Mg-dependent methyl migration to produce 3-hydroxy-3-methyl-2-ketobutyrate (HMKB). In the reductase reaction, this 2-ketoacid undergoes a metal-dependent reduction by NADPH to yield (R)-2,3-dihydroxy-isovalerate. The chain is Ketol-acid reductoisomerase (NADP(+)) from Ruthia magnifica subsp. Calyptogena magnifica.